Consider the following 299-residue polypeptide: Putative glycylpeptide N-tetradecanoyltransferase (299 aa).

The protein belongs to the NMT family.

It carries out the reaction N-terminal glycyl-[protein] + tetradecanoyl-CoA = N-tetradecanoylglycyl-[protein] + CoA + H(+). Adds a myristoyl group to the N-terminal glycine residue of certain proteins. This is Putative glycylpeptide N-tetradecanoyltransferase from Amsacta moorei entomopoxvirus (AmEPV).